A 647-amino-acid chain; its full sequence is Epithelial sodium channel subunit beta (647 aa).

Residues 1 to 57 (MIHGKMKRLKRYFTRALHRIQKGPGYTYKELLVWFCDNTNTHGPKRIIKEGPKKRVM) are Cytoplasmic-facing. A helical transmembrane segment spans residues 58 to 78 (WFILTLVFAGLVFWQWGVLIL). The Extracellular portion of the chain corresponds to 79–552 (TYLSYGVSVS…GGQFGFWMGG (474 aa)). Disulfide bonds link C104/C291, C215/C222, C268/C275, C381/C468, C406/C464, C410/C460, C419/C446, and C421/C435. The helical transmembrane segment at 553 to 573 (SVLCIIEFGEIIIDCMWITIL) threads the bilayer. Over 574 to 647 (KFLAWSRNRR…AEPVSSDEEN (74 aa)) the chain is Cytoplasmic. The disordered stretch occupies residues 586–647 (RKRPQYSDPP…AEPVSSDEEN (62 aa)).

This sequence belongs to the amiloride-sensitive sodium channel (TC 1.A.6) family. SCNN1B subfamily. In terms of assembly, component of the heterotrimeric epithelial sodium channel (ENaC) composed of an alpha/SCNN1A, a beta/SCNN1B and a gamma/SCNN1G subunit.

The protein resides in the apical cell membrane. The protein localises to the cytoplasmic vesicle membrane. It carries out the reaction Na(+)(in) = Na(+)(out). Its activity is regulated as follows. Originally identified and characterized by its inhibition by the diuretic drug amiloride. This is one of the three pore-forming subunits of the heterotrimeric epithelial sodium channel (ENaC), a critical regulator of sodium balance and fluid homeostasis. ENaC operates in epithelial tissues, where it mediates the electrodiffusion of sodium ions from extracellular fluid through the apical membrane of cells, with water following osmotically. The chain is Epithelial sodium channel subunit beta (scnn1b-a) from Xenopus laevis (African clawed frog).